A 226-amino-acid chain; its full sequence is ATP-dependent dethiobiotin synthetase BioD (226 aa).

Position 14-19 (14-19 (GIGKTF)) interacts with ATP. Position 18 (Thr18) interacts with Mg(2+). Lys39 is an active-site residue. Ser43 contributes to the substrate binding site. ATP-binding positions include Asp56, 117–120 (EGVG), 177–178 (NT), 206–208 (PHI), and Asn213. Positions 56 and 117 each coordinate Mg(2+).

The protein belongs to the dethiobiotin synthetase family. Homodimer. Requires Mg(2+) as cofactor.

It is found in the cytoplasm. The enzyme catalyses (7R,8S)-7,8-diammoniononanoate + CO2 + ATP = (4R,5S)-dethiobiotin + ADP + phosphate + 3 H(+). It participates in cofactor biosynthesis; biotin biosynthesis; biotin from 7,8-diaminononanoate: step 1/2. In terms of biological role, catalyzes a mechanistically unusual reaction, the ATP-dependent insertion of CO2 between the N7 and N8 nitrogen atoms of 7,8-diaminopelargonic acid (DAPA, also called 7,8-diammoniononanoate) to form a ureido ring. The chain is ATP-dependent dethiobiotin synthetase BioD from Xylella fastidiosa (strain 9a5c).